The following is a 291-amino-acid chain: Oligopeptide transport system permease protein OppC (291 aa).

The next 6 membrane-spanning stretches (helical) occupy residues 22-42 (VASL…PPLL), 85-105 (MLIG…VGAI), 116-136 (TLMW…IAIV), 142-162 (NSAN…MISS), 209-229 (ALNV…GFGI), and 247-267 (ATAF…ILVC). The region spanning 81–272 (MQKSMLIGVC…LILVCANLTG (192 aa)) is the ABC transmembrane type-1 domain.

Belongs to the binding-protein-dependent transport system permease family. OppBC subfamily. As to quaternary structure, the complex is composed of an ATP-binding protein (OppD), two transmembrane proteins (OppB and OppC) and a solute-binding protein (OppA).

Its subcellular location is the cell inner membrane. Its function is as follows. Part of the ABC transporter complex OppABCD involved in the uptake of oligopeptides. Responsible for the translocation of the substrate across the membrane. The protein is Oligopeptide transport system permease protein OppC of Mycobacterium bovis (strain ATCC BAA-935 / AF2122/97).